Here is a 284-residue protein sequence, read N- to C-terminus: Putative L-ribulose-5-phosphate 3-epimerase UlaE (284 aa).

It belongs to the L-ribulose-5-phosphate 3-epimerase family.

It catalyses the reaction L-ribulose 5-phosphate = L-xylulose 5-phosphate. Its pathway is cofactor degradation; L-ascorbate degradation; D-xylulose 5-phosphate from L-ascorbate: step 3/4. Catalyzes the isomerization of L-xylulose-5-phosphate to L-ribulose-5-phosphate. Is involved in the anaerobic L-ascorbate utilization. The sequence is that of Putative L-ribulose-5-phosphate 3-epimerase UlaE from Shigella dysenteriae serotype 1 (strain Sd197).